A 273-amino-acid polypeptide reads, in one-letter code: 2,3,4,5-tetrahydropyridine-2,6-dicarboxylate N-succinyltransferase (273 aa).

Residues R105 and D142 each coordinate substrate.

This sequence belongs to the transferase hexapeptide repeat family. In terms of assembly, homotrimer.

The protein localises to the cytoplasm. The enzyme catalyses (S)-2,3,4,5-tetrahydrodipicolinate + succinyl-CoA + H2O = (S)-2-succinylamino-6-oxoheptanedioate + CoA. It participates in amino-acid biosynthesis; L-lysine biosynthesis via DAP pathway; LL-2,6-diaminopimelate from (S)-tetrahydrodipicolinate (succinylase route): step 1/3. The chain is 2,3,4,5-tetrahydropyridine-2,6-dicarboxylate N-succinyltransferase from Bordetella parapertussis (strain 12822 / ATCC BAA-587 / NCTC 13253).